Reading from the N-terminus, the 209-residue chain is Protein-L-isoaspartate O-methyltransferase (209 aa).

Residue Ser59 is part of the active site.

This sequence belongs to the methyltransferase superfamily. L-isoaspartyl/D-aspartyl protein methyltransferase family.

The protein localises to the cytoplasm. The enzyme catalyses [protein]-L-isoaspartate + S-adenosyl-L-methionine = [protein]-L-isoaspartate alpha-methyl ester + S-adenosyl-L-homocysteine. In terms of biological role, catalyzes the methyl esterification of L-isoaspartyl residues in peptides and proteins that result from spontaneous decomposition of normal L-aspartyl and L-asparaginyl residues. It plays a role in the repair and/or degradation of damaged proteins. This Helicobacter pylori (strain P12) protein is Protein-L-isoaspartate O-methyltransferase.